The sequence spans 390 residues: uncharacterized protein (390 aa).

The next 11 helical transmembrane spans lie at 7–27 (IYIL…ISGI), 35–55 (LGIT…VYAL), 77–97 (LGLF…GWFI), 101–121 (IIMA…AAKI), 128–148 (GSAI…GVPL), 161–181 (VFGA…FTLP), 203–223 (VAMG…AYTY), 238–258 (LLSG…KFGG), 281–301 (LILL…LILW), 335–355 (MQFA…NVSL), and 357–377 (SITW…LLIF).

This sequence belongs to the major facilitator superfamily.

The protein resides in the cell membrane. This is an uncharacterized protein from Bacillus subtilis (strain 168).